A 200-amino-acid polypeptide reads, in one-letter code: Pyridoxal 5'-phosphate synthase subunit PdxT (200 aa).

52-54 is an L-glutamine binding site; sequence GES. Cys-84 serves as the catalytic Nucleophile. Residues Arg-116 and 145–146 contribute to the L-glutamine site; that span reads IR. Residues His-181 and Glu-183 each act as charge relay system in the active site.

The protein belongs to the glutaminase PdxT/SNO family. In the presence of PdxS, forms a dodecamer of heterodimers. Only shows activity in the heterodimer.

It carries out the reaction aldehydo-D-ribose 5-phosphate + D-glyceraldehyde 3-phosphate + L-glutamine = pyridoxal 5'-phosphate + L-glutamate + phosphate + 3 H2O + H(+). The catalysed reaction is L-glutamine + H2O = L-glutamate + NH4(+). Its pathway is cofactor biosynthesis; pyridoxal 5'-phosphate biosynthesis. Catalyzes the hydrolysis of glutamine to glutamate and ammonia as part of the biosynthesis of pyridoxal 5'-phosphate. The resulting ammonia molecule is channeled to the active site of PdxS. This is Pyridoxal 5'-phosphate synthase subunit PdxT from Sulfurisphaera tokodaii (strain DSM 16993 / JCM 10545 / NBRC 100140 / 7) (Sulfolobus tokodaii).